The chain runs to 324 residues: Tumor necrosis factor receptor superfamily member 6 (324 aa).

Positions 1–21 are cleaved as a signal peptide; that stretch reads MLWIMAVLPLVLAGPELNVRM. Residues 22 to 171 are Extracellular-facing; the sequence is QGTDSIFEGL…CKKQSSNYKL (150 aa). Asparagine 43 carries N-linked (GlcNAc...) asparagine glycosylation. TNFR-Cys repeat units lie at residues 43 to 79, 80 to 123, and 124 to 163; these read NCSEGLYQVGPFCCQPCQPGERKVKDCTTSGGAPTCH, PCTE…NTKC, and RCKENFYCNASLCDHCYHCTSCGLEDILEPCTRTSNTKCK. Disulfide bonds link cysteine 44–cysteine 55, cysteine 56–cysteine 69, cysteine 59–cysteine 78, cysteine 81–cysteine 97, cysteine 100–cysteine 115, cysteine 103–cysteine 123, cysteine 125–cysteine 139, cysteine 142–cysteine 154, and cysteine 145–cysteine 162. Asparagine 114 and asparagine 132 each carry an N-linked (GlcNAc...) asparagine glycan. A helical transmembrane segment spans residues 172 to 188; it reads LWLLILPGLAILFVFIY. Residues 189-324 lie on the Cytoplasmic side of the membrane; it reads KRYRKRQPGD…RNENEGQSLE (136 aa). An interaction with HIPK3 region spans residues 201-306; sequence SGIPSPESVP…EEIQAMVWED (106 aa). Serine 214 is modified (phosphoserine). Residues 219–243 form an interaction with CALM region; it reads NKYIWRTAEKMKICDAKKFARQHKI. The 85-residue stretch at 219-303 folds into the Death domain; it reads NKYIWRTAEK…DIAEEIQAMV (85 aa).

In terms of assembly, component of the death-induced signaling complex (DISC) composed of cell surface receptor FAS/CD95, adapter protein FADD and the CASP8 protease; recruitment of CASP8 to the complex is required for processing of CASP8 into the p18 and p10 subunits. Interacts directly (via DED domain) with NOL3 (via CARD domain); inhibits death-inducing signaling complex (DISC) assembly by inhibiting the increase in FAS-FADD binding induced by FAS activation. Binds DAXX. Interacts with HIPK3. Part of a complex containing HIPK3 and FADD. Binds RIPK1 and FAIM2. Interacts with BABAM2 and FEM1B. Interacts with CALM. In the absence of stimulation, interacts with BIRC2, DDX3X and GSK3B. The interaction with BIRC2 and DDX3X is further enhanced upon receptor stimulation and accompanied by DDX3X and BIRC2 cleavage. Palmitoylated. Palmitoylation by ZDHHC7 prevents the lysosomal degradation of FAS regulating its expression at the plasma membrane.

Its subcellular location is the cell membrane. It is found in the membrane raft. In terms of biological role, receptor for TNFSF6/FASLG. The adapter molecule FADD recruits caspase CASP8 to the activated receptor. The resulting death-inducing signaling complex (DISC) performs CASP8 proteolytic activation which initiates the subsequent cascade of caspases (aspartate-specific cysteine proteases) mediating apoptosis. FAS-mediated apoptosis may have a role in the induction of peripheral tolerance, in the antigen-stimulated suicide of mature T-cells, or both. This is Tumor necrosis factor receptor superfamily member 6 (Fas) from Rattus norvegicus (Rat).